We begin with the raw amino-acid sequence, 485 residues long: N-succinylglutamate 5-semialdehyde dehydrogenase (485 aa).

G220 to G225 contributes to the NAD(+) binding site. Catalysis depends on residues E243 and C278.

It belongs to the aldehyde dehydrogenase family. AstD subfamily.

It catalyses the reaction N-succinyl-L-glutamate 5-semialdehyde + NAD(+) + H2O = N-succinyl-L-glutamate + NADH + 2 H(+). It participates in amino-acid degradation; L-arginine degradation via AST pathway; L-glutamate and succinate from L-arginine: step 4/5. In terms of biological role, catalyzes the NAD-dependent reduction of succinylglutamate semialdehyde into succinylglutamate. The protein is N-succinylglutamate 5-semialdehyde dehydrogenase of Vibrio cholerae serotype O1 (strain M66-2).